Consider the following 287-residue polypeptide: Cyclopropane mycolic acid synthase MmaA2 (287 aa).

S-adenosyl-L-methionine-binding positions include 33 to 34 (YS), 72 to 74 (GCG), 94 to 99 (TLSKNQ), 123 to 124 (WE), and I136. The active site involves C269.

Belongs to the CFA/CMAS family.

It carries out the reaction a 1-acyl-2-(9Z)-enoyl-sn-glycero-3-phospholipid + S-adenosyl-L-methionine = a 1-acyl-2-(9-cyclopronane)-acyl-sn-glycero-3-phospholipid + S-adenosyl-L-homocysteine + H(+). It functions in the pathway lipid metabolism; mycolic acid biosynthesis. Functionally, catalyzes the conversion of a double bond to a cis cyclopropane ring at the distal position of an alpha mycolic acid via the transfer of a methylene group from S-adenosyl-L-methionine. MmaA2 also catalyzes the biosynthesis of the cis-cyclopropanated methoxymycolates. Cyclopropanated mycolic acids are key factors participating in cell envelope permeability, host immunomodulation and persistence. The protein is Cyclopropane mycolic acid synthase MmaA2 (cmaC) of Mycobacterium bovis (strain ATCC BAA-935 / AF2122/97).